We begin with the raw amino-acid sequence, 228 residues long: U1 small nuclear ribonucleoprotein C-2 (228 aa).

The Matrin-type zinc-finger motif lies at 4–36 (YYCDYCDTYLTHDSPSVRKQHNAGYKHKANVRT). Residues 105–228 (PGVRPPILPA…SYALPSEGNH (124 aa)) form a disordered region. Composition is skewed to pro residues over residues 107 to 156 (VRPP…PPGS) and 164 to 175 (LPRPPTLPPPTS). The segment covering 178–190 (PGAPIPNSAAPPA) has biased composition (low complexity). The segment covering 196-214 (PPAPAGPTSGAPPAPPTAP) has biased composition (pro residues).

It belongs to the U1 small nuclear ribonucleoprotein C family. In terms of assembly, U1 snRNP is composed of the 7 core Sm proteins B/B', D1, D2, D3, E, F and G that assemble in a heptameric protein ring on the Sm site of the small nuclear RNA to form the core snRNP, and at least 3 U1 snRNP-specific proteins U1-70K, U1-A and U1-C. U1-C interacts with U1 snRNA and the 5' splice-site region of the pre-mRNA.

The protein localises to the nucleus. Functionally, component of the spliceosomal U1 snRNP, which is essential for recognition of the pre-mRNA 5' splice-site and the subsequent assembly of the spliceosome. U1-C is directly involved in initial 5' splice-site recognition for both constitutive and regulated alternative splicing. The interaction with the 5' splice-site seems to precede base-pairing between the pre-mRNA and the U1 snRNA. Stimulates commitment or early (E) complex formation by stabilizing the base pairing of the 5' end of the U1 snRNA and the 5' splice-site region. This Sorghum bicolor (Sorghum) protein is U1 small nuclear ribonucleoprotein C-2.